Consider the following 426-residue polypeptide: Histidine--tRNA ligase (426 aa).

This sequence belongs to the class-II aminoacyl-tRNA synthetase family. As to quaternary structure, homodimer.

It localises to the cytoplasm. It catalyses the reaction tRNA(His) + L-histidine + ATP = L-histidyl-tRNA(His) + AMP + diphosphate + H(+). The protein is Histidine--tRNA ligase of Hydrogenovibrio crunogenus (strain DSM 25203 / XCL-2) (Thiomicrospira crunogena).